A 171-amino-acid chain; its full sequence is Myelin basic protein (171 aa).

N-acetylalanine is present on Ala-1. Residues 1–12 (ASQKRPSQRHGS) are compositionally biased toward basic residues. Residues 1 to 171 (ASQKRPSQRH…SRSGSPMARR (171 aa)) are disordered. Ser-7 and Ser-12 each carry phosphoserine. Phosphotyrosine is present on Tyr-14. Phosphoserine is present on Ser-19. A Phosphothreonine modification is found at Thr-20. 2 positions are modified to citrulline: Arg-25 and Arg-31. At Thr-35 the chain carries Phosphothreonine. Ser-39 is subject to Phosphoserine. 2 positions are modified to omega-N-methylarginine: Arg-42 and Arg-48. Position 55 is a phosphoserine (Ser-55). Thr-66 carries the phosphothreonine modification. A Phosphotyrosine modification is found at Tyr-68. Thr-95 and Thr-98 each carry phosphothreonine. Gln-103 is subject to Deamidated glutamine. Arg-107 bears the Omega-N-methylarginine; alternate mark. Symmetric dimethylarginine; alternate is present on Arg-107. Ser-115 carries the phosphoserine modification. Lys-122 carries the N6-acetyllysine modification. Citrulline is present on Arg-130. Gln-148 carries the post-translational modification Deamidated glutamine. Residue Arg-160 is modified to Citrulline. Position 162 is a phosphoserine (Ser-162). Ser-166 carries the phosphoserine; by UHMK1 modification. A Citrulline modification is found at Arg-171.

The protein belongs to the myelin basic protein family. Homodimer. As in other animals, several charge isomers may be produced as a result of optional post-translational modifications, such as phosphorylation of serine or threonine residues, deamidation of glutamine or asparagine residues, citrullination and methylation of arginine residues. In terms of processing, phosphorylated by TAOK2, VRK2, MAPK11, MAPK12, MAPK14 and MINK1. Post-translationally, proteolytically cleaved in B cell lysosomes by cathepsin CTSG which degrades the major immunogenic MBP epitope and prevents the activation of MBP-specific autoreactive T cells.

The protein resides in the myelin membrane. Is, with PLP, the most abundant protein component of the myelin membrane in the CNS. Has a role in both the formation and stabilization of this compact multilayer arrangement of bilayers. Each splice variant and charge isomer may have a specialized function in the assembly of an optimized, biochemically functional myelin membrane. The sequence is that of Myelin basic protein (MBP) from Sus scrofa (Pig).